Reading from the N-terminus, the 1308-residue chain is Tau-tubulin kinase 1 (1308 aa).

The 264-residue stretch at 34–297 folds into the Protein kinase domain; sequence WKVLKKIGGG…LIMSVFENSM (264 aa). Residues 40-48 and Lys-63 contribute to the ATP site; that span reads IGGGGFGEI. Asp-154 (proton acceptor) is an active-site residue. Disordered regions lie at residues 364–397, 418–448, 474–671, 720–899, 985–1085, and 1097–1308; these read LSDQENAPPILPGRPPEGLGPGPHLVPHPGGPEA, PCVEEEQSRGVGVPSSPVRAPPDSPTTPVRS, ERRS…APPF, QVPL…AGGG, EMES…LARL, and RLAS…PGAR. At Ser-441 the chain carries Phosphoserine. Residues 485–496 show a composition bias toward polar residues; sequence PSRQACSSQPAQ. Position 541 is a phosphoserine (Ser-541). Composition is skewed to basic and acidic residues over residues 541–555 and 574–589; these read SKEWVIIDKETELKD and ELRPLPEEGEERRRLG. The span at 638 to 647 shows a compositional bias: low complexity; it reads SPSHSPLHSG. The segment covering 735–769 has biased composition (acidic residues); the sequence is GEEEEEEEEEEEEEEEEEEEEEEEEEEEEEEEEEA. Residues 786–795 show a composition bias toward basic and acidic residues; that stretch reads GSERSTERSQ. Polar residues-rich tracts occupy residues 868-885 and 1020-1035; these read PTGSQLDVSEPGTLSSIL and ASQQEPVTKKGTTISP. A compositionally biased stretch (low complexity) spans 1097–1107; it reads RLASGASSSSS.

The protein belongs to the protein kinase superfamily. CK1 Ser/Thr protein kinase family. Mg(2+) is required as a cofactor. The cofactor is Mn(2+). As to expression, expressed in the brain. Strong expression in the cortical layers, the CA1 layers of the hippocampus and the granular layer of the cerebellum. Also expressed in the large cortical pyramidal cells in the temporal cortex, the CA1 pyramidal neurons and the cerebellum granular neurons.

The protein resides in the cytoplasm. The enzyme catalyses L-seryl-[protein] + ATP = O-phospho-L-seryl-[protein] + ADP + H(+). It carries out the reaction L-threonyl-[protein] + ATP = O-phospho-L-threonyl-[protein] + ADP + H(+). Serine/threonine kinase which is able to phosphorylate TAU on serine, threonine and tyrosine residues. Induces aggregation of TAU. This Mus musculus (Mouse) protein is Tau-tubulin kinase 1 (Ttbk1).